Here is a 554-residue protein sequence, read N- to C-terminus: Probable pectinesterase/pectinesterase inhibitor 6 (554 aa).

The first 32 residues, 1–32 (MDHKILLTPPKSLYTKCIITIIYVVSISHLNA), serve as a signal peptide directing secretion. The tract at residues 29–183 (HLNAHFITSC…TKSISNSLAV (155 aa)) is pectinesterase inhibitor 6. N119 and N172 each carry an N-linked (GlcNAc...) asparagine glycan. Residues 250 to 540 (DLVVAKDGSG…FTVENFLDGN (291 aa)) are pectinesterase 6. The substrate site is built by T327 and Q357. D380 (proton donor; for pectinesterase activity) is an active-site residue. An intrachain disulfide couples C394 to C414. D401 (nucleophile; for pectinesterase activity) is an active-site residue. Residues R460 and W462 each coordinate substrate.

This sequence in the N-terminal section; belongs to the PMEI family. The protein in the C-terminal section; belongs to the pectinesterase family. As to expression, expressed in rosette leaves, flower and siliques.

Its subcellular location is the secreted. It localises to the cell wall. It carries out the reaction [(1-&gt;4)-alpha-D-galacturonosyl methyl ester](n) + n H2O = [(1-&gt;4)-alpha-D-galacturonosyl](n) + n methanol + n H(+). Its pathway is glycan metabolism; pectin degradation; 2-dehydro-3-deoxy-D-gluconate from pectin: step 1/5. Functionally, acts in the modification of cell walls via demethylesterification of cell wall pectin. This Arabidopsis thaliana (Mouse-ear cress) protein is Probable pectinesterase/pectinesterase inhibitor 6 (PME6).